We begin with the raw amino-acid sequence, 542 residues long: CTP synthase (542 aa).

The segment at 1-265 is amidoligase domain; that stretch reads MARYVFITGG…DSEILSAFGI (265 aa). Serine 13 lines the CTP pocket. Serine 13 lines the UTP pocket. Position 14 to 19 (14 to 19) interacts with ATP; it reads SLGKGI. Tyrosine 54 lines the L-glutamine pocket. Aspartate 71 serves as a coordination point for ATP. Mg(2+) is bound by residues aspartate 71 and glutamate 139. CTP is bound by residues 146–148, 186–191, and lysine 222; these read DIE and KTKPTQ. Residues 186–191 and lysine 222 contribute to the UTP site; that span reads KTKPTQ. One can recognise a Glutamine amidotransferase type-1 domain in the interval 291–541; sequence TIAIVGKYTG…IAATVEQSRL (251 aa). Alanine 353 serves as a coordination point for L-glutamine. Cysteine 380 (nucleophile; for glutamine hydrolysis) is an active-site residue. Residues 381-384, glutamate 404, and arginine 469 each bind L-glutamine; that span reads FGMQ. Active-site residues include histidine 514 and glutamate 516.

Belongs to the CTP synthase family. In terms of assembly, homotetramer.

It carries out the reaction UTP + L-glutamine + ATP + H2O = CTP + L-glutamate + ADP + phosphate + 2 H(+). The catalysed reaction is L-glutamine + H2O = L-glutamate + NH4(+). It catalyses the reaction UTP + NH4(+) + ATP = CTP + ADP + phosphate + 2 H(+). It participates in pyrimidine metabolism; CTP biosynthesis via de novo pathway; CTP from UDP: step 2/2. With respect to regulation, allosterically activated by GTP, when glutamine is the substrate; GTP has no effect on the reaction when ammonia is the substrate. The allosteric effector GTP functions by stabilizing the protein conformation that binds the tetrahedral intermediate(s) formed during glutamine hydrolysis. Inhibited by the product CTP, via allosteric rather than competitive inhibition. Its function is as follows. Catalyzes the ATP-dependent amination of UTP to CTP with either L-glutamine or ammonia as the source of nitrogen. Regulates intracellular CTP levels through interactions with the four ribonucleotide triphosphates. The sequence is that of CTP synthase from Bartonella bacilliformis (strain ATCC 35685 / KC583 / Herrer 020/F12,63).